Reading from the N-terminus, the 148-residue chain is Natriuretic peptide BF131 (148 aa).

The first 27 residues, 1-27 (MVGPSRLAGGGLLLLLLLALLPLALDG), serve as a signal peptide directing secretion. A propeptide spanning residues 28–83 (KPAPPPQALPKDPAAASAAERIMRALLPDSKSSRPATDRMVHPEHQAGGGDTRRLQ) is cleaved from the precursor. 2 disordered regions span residues 54 to 83 (LPDS…RRLQ) and 105 to 127 (TSDM…PSAA). Residues 63 to 83 (ATDRMVHPEHQAGGGDTRRLQ) show a composition bias toward basic and acidic residues. Cys-94 and Cys-110 are disulfide-bonded. Positions 130 to 148 (AVTWLIRDLRADSKQSRAA) are excised as a propeptide.

The protein belongs to the natriuretic peptide family. As to expression, expressed by the venom gland.

The protein localises to the secreted. Functionally, natriuretic peptide that dose-dependently induces the rapid relaxation of rat aortic strips phenylephrine-precontracted. Acts by stimulating cGMP production in a dose-dependent manner (by probably activating NPR1 and/or NPR2). May also show potent hypotensive effects. This Bungarus flaviceps flaviceps (Red-headed krait) protein is Natriuretic peptide BF131.